The primary structure comprises 404 residues: Probable tRNA sulfurtransferase (404 aa).

One can recognise a THUMP domain in the interval 60 to 165 (TAVAESLKQV…EEAAYLSYET (106 aa)). ATP is bound by residues 183 to 184 (ML), 208 to 209 (HF), arginine 265, glycine 287, and glutamine 296.

It belongs to the ThiI family.

It is found in the cytoplasm. The catalysed reaction is [ThiI sulfur-carrier protein]-S-sulfanyl-L-cysteine + a uridine in tRNA + 2 reduced [2Fe-2S]-[ferredoxin] + ATP + H(+) = [ThiI sulfur-carrier protein]-L-cysteine + a 4-thiouridine in tRNA + 2 oxidized [2Fe-2S]-[ferredoxin] + AMP + diphosphate. It carries out the reaction [ThiS sulfur-carrier protein]-C-terminal Gly-Gly-AMP + S-sulfanyl-L-cysteinyl-[cysteine desulfurase] + AH2 = [ThiS sulfur-carrier protein]-C-terminal-Gly-aminoethanethioate + L-cysteinyl-[cysteine desulfurase] + A + AMP + 2 H(+). It functions in the pathway cofactor biosynthesis; thiamine diphosphate biosynthesis. Functionally, catalyzes the ATP-dependent transfer of a sulfur to tRNA to produce 4-thiouridine in position 8 of tRNAs, which functions as a near-UV photosensor. Also catalyzes the transfer of sulfur to the sulfur carrier protein ThiS, forming ThiS-thiocarboxylate. This is a step in the synthesis of thiazole, in the thiamine biosynthesis pathway. The sulfur is donated as persulfide by IscS. This chain is Probable tRNA sulfurtransferase, found in Streptococcus pneumoniae serotype 19F (strain G54).